We begin with the raw amino-acid sequence, 940 residues long: Isoleucine--tRNA ligase (940 aa).

Positions Pro-59–His-69 match the 'HIGH' region motif. Position 563 (Glu-563) interacts with L-isoleucyl-5'-AMP. The 'KMSKS' region motif lies at Lys-604–Ser-608. Lys-607 provides a ligand contact to ATP. Residues Cys-903, Cys-906, Cys-923, and Cys-926 each contribute to the Zn(2+) site.

The protein belongs to the class-I aminoacyl-tRNA synthetase family. IleS type 1 subfamily. As to quaternary structure, monomer. Zn(2+) serves as cofactor.

It is found in the cytoplasm. The catalysed reaction is tRNA(Ile) + L-isoleucine + ATP = L-isoleucyl-tRNA(Ile) + AMP + diphosphate. Catalyzes the attachment of isoleucine to tRNA(Ile). As IleRS can inadvertently accommodate and process structurally similar amino acids such as valine, to avoid such errors it has two additional distinct tRNA(Ile)-dependent editing activities. One activity is designated as 'pretransfer' editing and involves the hydrolysis of activated Val-AMP. The other activity is designated 'posttransfer' editing and involves deacylation of mischarged Val-tRNA(Ile). This chain is Isoleucine--tRNA ligase, found in Wigglesworthia glossinidia brevipalpis.